A 154-amino-acid chain; its full sequence is Large ribosomal subunit protein uL30 (154 aa).

Belongs to the universal ribosomal protein uL30 family. In terms of assembly, part of the 50S ribosomal subunit.

In Methanococcus vannielii, this protein is Large ribosomal subunit protein uL30.